Here is a 168-residue protein sequence, read N- to C-terminus: 3'-5' exoribonuclease MT2234.1 (168 aa).

Mg(2+) is bound at residue aspartate 6. The interval 6 to 9 (DTEF) is RNA binding.

Homodimer. Requires Mg(2+) as cofactor.

In terms of biological role, exonuclease that cleaves single-stranded 3' overhangs of double-stranded RNA. The chain is 3'-5' exoribonuclease MT2234.1 from Mycobacterium tuberculosis (strain CDC 1551 / Oshkosh).